A 264-amino-acid chain; its full sequence is Probable DNA polymerase sliding clamp 2 (264 aa).

The DNA-binding element occupies 75 to 94; the sequence is SIAQEATVGIKISNFVRILD.

This sequence belongs to the PCNA family.

Sliding clamp subunit. Responsible for tethering the catalytic subunit of DNA polymerase to DNA during high-speed replication. In Paramecium bursaria Chlorella virus 1 (PBCV-1), this protein is Probable DNA polymerase sliding clamp 2.